The primary structure comprises 164 residues: 5-formyltetrahydrofolate cyclo-ligase (164 aa).

Lysine 3–arginine 7 contributes to the ATP binding site. The substrate site is built by glutamate 50 and glutamate 55. Residue arginine 115 to tyrosine 123 coordinates ATP. Aspartate 124 is a binding site for Mg(2+). Residues arginine 125 and tryptophan 153 each contribute to the ATP site. Aspartate 154 is a Mg(2+) binding site.

It belongs to the 5-formyltetrahydrofolate cyclo-ligase family. In terms of assembly, monomer or homodimer. Mg(2+) serves as cofactor. Requires Mn(2+) as cofactor. The cofactor is Ca(2+). It depends on Zn(2+) as a cofactor. Fe(2+) is required as a cofactor. Co(2+) serves as cofactor. Requires Cu(2+) as cofactor.

The protein localises to the cytoplasm. It catalyses the reaction (6S)-5-formyl-5,6,7,8-tetrahydrofolate + ATP = (6R)-5,10-methenyltetrahydrofolate + ADP + phosphate. In terms of biological role, involved in folate metabolism. Catalyzes the irreversible conversion of 5-formyltetrahydrofolate (5-FTHF) to yield 5,10-methenyltetrahydrofolate. The polypeptide is 5-formyltetrahydrofolate cyclo-ligase (Mycoplasma pneumoniae (strain ATCC 29342 / M129 / Subtype 1) (Mycoplasmoides pneumoniae)).